A 463-amino-acid polypeptide reads, in one-letter code: Trigger factor (463 aa).

The PPIase FKBP-type domain maps to 162–243; the sequence is GDVVTLDLEA…VSQVAARELP (82 aa). The segment at 427–463 is disordered; the sequence is TNGEIVDLDDEDETESTPETTEAAEAAEESTEDKPEA. A compositionally biased stretch (acidic residues) spans 432–442; it reads VDLDDEDETES.

It belongs to the FKBP-type PPIase family. Tig subfamily.

The protein localises to the cytoplasm. The enzyme catalyses [protein]-peptidylproline (omega=180) = [protein]-peptidylproline (omega=0). Involved in protein export. Acts as a chaperone by maintaining the newly synthesized protein in an open conformation. Functions as a peptidyl-prolyl cis-trans isomerase. This is Trigger factor from Streptomyces avermitilis (strain ATCC 31267 / DSM 46492 / JCM 5070 / NBRC 14893 / NCIMB 12804 / NRRL 8165 / MA-4680).